The sequence spans 120 residues: Cell division protein FtsL (120 aa).

Positions 1-22 are disordered; sequence MSNVAYKSNLEPNRVHREAEQP. At 1–37 the chain is on the cytoplasmic side; it reads MSNVAYKSNLEPNRVHREAEQPKKQILKRGQMTLGEK. Positions 13 to 22 are enriched in basic and acidic residues; it reads NRVHREAEQP. Residues 38-58 traverse the membrane as a helical segment; the sequence is VIITIALAIVLVVAFRIISVQ. Residues 59–120 are Extracellular-facing; it reads AQIYTVNQEI…GDNVKVVDGQ (62 aa).

The protein belongs to the FtsL family.

Its subcellular location is the cell membrane. Its function is as follows. Essential cell division protein. The protein is Cell division protein FtsL of Listeria monocytogenes serovar 1/2a (strain ATCC BAA-679 / EGD-e).